Consider the following 153-residue polypeptide: Ribosomal RNA large subunit methyltransferase H (153 aa).

S-adenosyl-L-methionine contacts are provided by Leu-71 and Gly-102.

This sequence belongs to the RNA methyltransferase RlmH family. Homodimer.

The protein localises to the cytoplasm. The enzyme catalyses pseudouridine(1915) in 23S rRNA + S-adenosyl-L-methionine = N(3)-methylpseudouridine(1915) in 23S rRNA + S-adenosyl-L-homocysteine + H(+). Its function is as follows. Specifically methylates the pseudouridine at position 1915 (m3Psi1915) in 23S rRNA. The chain is Ribosomal RNA large subunit methyltransferase H from Anaeromyxobacter dehalogenans (strain 2CP-C).